Reading from the N-terminus, the 249-residue chain is Probable septum site-determining protein MinC (249 aa).

A disordered region spans residues 115–141; the sequence is KPAQEAPAQAEPEAAAAPEPANEPAPA. The span at 118–141 shows a compositional bias: low complexity; it reads QEAPAQAEPEAAAAPEPANEPAPA.

It belongs to the MinC family. In terms of assembly, interacts with MinD and FtsZ.

Its function is as follows. Cell division inhibitor that blocks the formation of polar Z ring septums. Rapidly oscillates between the poles of the cell to destabilize FtsZ filaments that have formed before they mature into polar Z rings. Prevents FtsZ polymerization. The protein is Probable septum site-determining protein MinC of Marinobacter nauticus (strain ATCC 700491 / DSM 11845 / VT8) (Marinobacter aquaeolei).